The sequence spans 631 residues: ATP-dependent zinc metalloprotease FtsH (631 aa).

Residues 1–2 lie on the Stromal side of the membrane; that stretch reads MK. The helical transmembrane segment at 3-23 threads the bilayer; the sequence is ISWKNILLTLIPLGLISFLVW. Over 24–118 the chain is Lumenal; sequence QGFNNTTNPQ…AHATNDSTPA (95 aa). A helical membrane pass occupies residues 119 to 139; the sequence is WSLIGNLIFPILLIAGLAFLF. Residues 140-631 lie on the Stromal side of the membrane; the sequence is RRSSNLPGGP…IDYKSQLKST (492 aa). Residue 213–220 participates in ATP binding; it reads GPPGTGKT. His-434 is a binding site for Zn(2+). The active site involves Glu-435. Zn(2+) is bound by residues His-438 and Asp-512.

The protein in the central section; belongs to the AAA ATPase family. It in the C-terminal section; belongs to the peptidase M41 family. Homohexamer. The cofactor is Zn(2+).

Its subcellular location is the plastid. It localises to the chloroplast thylakoid membrane. Acts as a processive, ATP-dependent zinc metallopeptidase. The polypeptide is ATP-dependent zinc metalloprotease FtsH (Guillardia theta (Cryptophyte)).